The chain runs to 423 residues: Putative competence-damage inducible protein (423 aa).

It belongs to the CinA family.

This Streptococcus uberis (strain ATCC BAA-854 / 0140J) protein is Putative competence-damage inducible protein.